Here is a 203-residue protein sequence, read N- to C-terminus: SOSS complex subunit B1 (203 aa).

Positions 22–92 form a DNA-binding region, OB; it reads IVLETGRVTK…TLYTGRGGDL (71 aa). A disordered region spans residues 111 to 203; the sequence is PNPEYIAQQS…GKEPRRTGKR (93 aa). Positions 117–128 are enriched in polar residues; sequence AQQSQNKQAQAE. The segment covering 129–140 has biased composition (low complexity); sequence SGTGTNSHNSSS. Positions 149–182 are enriched in polar residues; the sequence is ENGNGSNSSGPPTHQSTAPTHSTSGRITRSQPNH.

This sequence belongs to the SOSS-B family. SOSS-B1 subfamily. In terms of assembly, component of the SOSS complex, composed of soss-b (soss-b1/nabp2 or soss-b2/nabp1), soss-a/ints3 and soss-c/inip. SOSS complexes containing soss-b1/nabp2 are more abundant than complexes containing soss-b2/nabp1.

The protein localises to the nucleus. In terms of biological role, component of the SOSS complex, a multiprotein complex that functions downstream of the MRN complex to promote DNA repair and G2/M checkpoint. In the SOSS complex, acts as a sensor of single-stranded DNA that binds to single-stranded DNA. The SOSS complex associates with DNA lesions and influences diverse endpoints in the cellular DNA damage response including cell-cycle checkpoint activation, recombinational repair and maintenance of genomic stability. Required for efficient homologous recombination-dependent repair of double-strand breaks (DSBs). The chain is SOSS complex subunit B1 (nabp2) from Xenopus tropicalis (Western clawed frog).